Consider the following 35-residue polypeptide: Mu-thomitoxin-Hme1c (35 aa).

3 disulfides stabilise this stretch: cysteine 2/cysteine 18, cysteine 9/cysteine 23, and cysteine 17/cysteine 34.

It belongs to the neurotoxin 07 (Beta/delta-agtx) family. As to expression, expressed by the venom gland.

It localises to the secreted. In terms of biological role, gating-modifier toxin that inhibits mammalian and insect voltage-gated sodium channels. It shifts the voltage dependence of channel activation to more positive voltages. It shows potent activity on Nav1.4/SCN4A (IC(50)=103 nM), Nav1.5/SCN5A (IC(50)=268 nM) and Para/DmNav1 (IC(50)=555 nM) and lower activities on Nav1.2/SCN2A (IC(50)=1447 nM) and Nav1.6/SCN8A (IC(50)=3504 nM). In addition, at a concentration of 1 uM, the toxin inhibits 90-100% of sodium current through Nav1.2/SCN2A, Nav1.4/SCN4A, Nav1.5/SCN5A, Nav1.6/SCN8A and Para/DmNav1 channels, when the voltage of maximal activation of the channel in control conditions is applied. It binds to the S3-S4 helix-loop-helix motif in the voltage-sensing domain of repeat 1 (shown on hNav1.4/SCN4A). The toxin is amphiphilic and binds to both neutral and negatively charged lipid vesicles with high affinity. The hydrophobic face lies on the opposite side to the hydrophobic faces of classical gating modifiers. The chain is Mu-thomitoxin-Hme1c from Heriaeus mellotteei (Crab spider).